A 291-amino-acid chain; its full sequence is Porphobilinogen deaminase (291 aa).

Residue C233 is modified to S-(dipyrrolylmethanemethyl)cysteine.

This sequence belongs to the HMBS family. Monomer. Dipyrromethane serves as cofactor.

It catalyses the reaction 4 porphobilinogen + H2O = hydroxymethylbilane + 4 NH4(+). It participates in porphyrin-containing compound metabolism; protoporphyrin-IX biosynthesis; coproporphyrinogen-III from 5-aminolevulinate: step 2/4. Tetrapolymerization of the monopyrrole PBG into the hydroxymethylbilane pre-uroporphyrinogen in several discrete steps. This is Porphobilinogen deaminase (hemC) from Ruminiclostridium josui (Clostridium josui).